Consider the following 312-residue polypeptide: tRNA pseudouridine synthase B (312 aa).

Aspartate 46 acts as the Nucleophile in catalysis. 3 residues coordinate substrate: tyrosine 74, tyrosine 177, and leucine 198.

Belongs to the pseudouridine synthase TruB family. Type 1 subfamily.

The catalysed reaction is uridine(55) in tRNA = pseudouridine(55) in tRNA. Responsible for synthesis of pseudouridine from uracil-55 in the psi GC loop of transfer RNAs. The sequence is that of tRNA pseudouridine synthase B from Buchnera aphidicola subsp. Acyrthosiphon pisum (strain APS) (Acyrthosiphon pisum symbiotic bacterium).